Reading from the N-terminus, the 276-residue chain is Large ribosomal subunit protein uL2 (276 aa).

The tract at residues 212-276 is disordered; it reads NRHRGIRPQT…KLIISRKKHK (65 aa). Positions 257–276 are enriched in basic residues; the sequence is YKTRKKKASDKLIISRKKHK.

The protein belongs to the universal ribosomal protein uL2 family. As to quaternary structure, part of the 50S ribosomal subunit. Forms a bridge to the 30S subunit in the 70S ribosome.

In terms of biological role, one of the primary rRNA binding proteins. Required for association of the 30S and 50S subunits to form the 70S ribosome, for tRNA binding and peptide bond formation. It has been suggested to have peptidyltransferase activity; this is somewhat controversial. Makes several contacts with the 16S rRNA in the 70S ribosome. This is Large ribosomal subunit protein uL2 from Helicobacter acinonychis (strain Sheeba).